The chain runs to 95 residues: Aspartyl/glutamyl-tRNA(Asn/Gln) amidotransferase subunit C (95 aa).

This sequence belongs to the GatC family. In terms of assembly, heterotrimer of A, B and C subunits.

It carries out the reaction L-glutamyl-tRNA(Gln) + L-glutamine + ATP + H2O = L-glutaminyl-tRNA(Gln) + L-glutamate + ADP + phosphate + H(+). It catalyses the reaction L-aspartyl-tRNA(Asn) + L-glutamine + ATP + H2O = L-asparaginyl-tRNA(Asn) + L-glutamate + ADP + phosphate + 2 H(+). Allows the formation of correctly charged Asn-tRNA(Asn) or Gln-tRNA(Gln) through the transamidation of misacylated Asp-tRNA(Asn) or Glu-tRNA(Gln) in organisms which lack either or both of asparaginyl-tRNA or glutaminyl-tRNA synthetases. The reaction takes place in the presence of glutamine and ATP through an activated phospho-Asp-tRNA(Asn) or phospho-Glu-tRNA(Gln). This Anaeromyxobacter sp. (strain Fw109-5) protein is Aspartyl/glutamyl-tRNA(Asn/Gln) amidotransferase subunit C.